Here is a 932-residue protein sequence, read N- to C-terminus: Ribosome biogenesis protein ERB1 (932 aa).

The span at 1 to 18 (MVRPSSSSSASASAARSG) shows a compositional bias: low complexity. The segment at 1–229 (MVRPSSSSSA…RSQAAQAFDL (229 aa)) is disordered. The span at 27–36 (PTATNPTTRA) shows a compositional bias: polar residues. Composition is skewed to acidic residues over residues 57 to 119 (VSDD…EVDS) and 150 to 172 (DNSD…DEDE). Residues 175–184 (SAFAARSDAS) are compositionally biased toward low complexity. 2 WD repeats span residues 555–594 (PDGG…CTAS) and 604–644 (AERS…NYAK). Residues 679–698 (SMPSKPDARSPVAWTRPSEA) are disordered. WD repeat units lie at residues 762 to 800 (SKGS…LIKT), 803 to 842 (SGFK…RPYK), 846 to 885 (YHAR…DYGE), and 901 to 932 (KNGL…LWTT).

The protein belongs to the WD repeat BOP1/ERB1 family. In terms of assembly, component of the NOP7 complex, composed of ERB1, NOP7 and YTM1. The complex is held together by ERB1, which interacts with NOP7 via its N-terminal domain and with YTM1 via a high-affinity interaction between the seven-bladed beta-propeller domains of the 2 proteins. The NOP7 complex associates with the 66S pre-ribosome.

The protein resides in the nucleus. It localises to the nucleolus. Its subcellular location is the nucleoplasm. In terms of biological role, component of the NOP7 complex, which is required for maturation of the 25S and 5.8S ribosomal RNAs and formation of the 60S ribosome. The polypeptide is Ribosome biogenesis protein ERB1 (Mycosarcoma maydis (Corn smut fungus)).